A 422-amino-acid polypeptide reads, in one-letter code: Steroid hormone receptor ERR1 (422 aa).

The segment at 1 to 66 (MSSQVVGIEP…EGAGSGEQGS (66 aa)) is disordered. Residues 1–76 (MSSQVVGIEP…GKLVLSSLPK (76 aa)) form a repressor domain region. A Glycyl lysine isopeptide (Lys-Gly) (interchain with G-Cter in SUMO) cross-link involves residue Lys-14. Phosphoserine is present on residues Ser-19 and Ser-22. The segment at residues 76-151 (KRLCLVCGDV…VGMLKEGVRL (76 aa)) is a DNA-binding region (nuclear receptor). 2 NR C4-type zinc fingers span residues 79 to 99 (CLVC…CEAC) and 115 to 134 (CPAS…CQAC). Residues Lys-129, Lys-138, Lys-160, and Lys-162 each carry the N6-acetyllysine; by PCAF/KAT2B modification. A Glycyl lysine isopeptide (Lys-Gly) (interchain with G-Cter in SUMO2) cross-link involves residue Lys-189. In terms of domain architecture, NR LBD spans 192–420 (PVNALVSHLL…KLFLEMLEAM (229 aa)). Residue Lys-402 forms a Glycyl lysine isopeptide (Lys-Gly) (interchain with G-Cter in SUMO); alternate linkage. Lys-402 is covalently cross-linked (Glycyl lysine isopeptide (Lys-Gly) (interchain with G-Cter in SUMO2); alternate). Residues 402-422 (KLEGKVPMHKLFLEMLEAMMD) are AF-2 domain.

Belongs to the nuclear hormone receptor family. NR3 subfamily. Binds DNA as a monomer or a homodimer. Interacts (via the AF2 domain) with coactivator PPARGC1A (via the L3 motif); the interaction greatly enhances transcriptional activity of genes involved in energy metabolism. Interacts with PIAS4; the interaction enhances sumoylation. Interacts with MAPK15; promotes re-localization of ESRRA to the cytoplasm through a XPO1-dependent mechanism then inhibits ESRRA transcriptional activity. In terms of processing, phosphorylation on Ser-19 enhances sumoylation on Lys-14 increasing repression of transcriptional activity. Sumoylated with SUMO2. Main site is Lys-14 which is enhanced by phosphorylation on Ser-19, cofactor activation, and by interaction with PIAS4. Sumoylation enhances repression of transcriptional activity, but has no effect on subcellular location nor on DNA binding. Post-translationally, reversibly acetylated. Acetylation by PCAF/KAT2 at Lys-129, Lys-138, Lys-160 and Lys-162 and PCAF/KAT2 decreases transcriptional activity probably by inhibiting DNA-binding activity; deacetylation involves SIRT1 and HDAC8 and increases DNA-binding. Most highly expressed in kidney, heart, and brown adipocytes. Also found in uterus, cervix and vagina.

It is found in the nucleus. The protein localises to the cytoplasm. Functionally, binds to an ERR-alpha response element (ERRE) containing a single consensus half-site, 5'-TNAAGGTCA-3'. Can bind to the medium-chain acyl coenzyme A dehydrogenase (MCAD) response element NRRE-1 and may act as an important regulator of MCAD promoter. Binds to the C1 region of the lactoferrin gene promoter. Requires dimerization and the coactivator, PGC-1A, for full activity. The ERRalpha/PGC1alpha complex is a regulator of energy metabolism. Induces the expression of PERM1 in the skeletal muscle. This Mus musculus (Mouse) protein is Steroid hormone receptor ERR1 (Esrra).